Reading from the N-terminus, the 226-residue chain is MSKKGKKYIEAFSKVDKNKFYNIEDAILLLKEIKFAKFDETIDISINLNLKKNHTVRDTIVLPNQFMKPKRILVFAKGDRADEARAFGATYVGDDDLINKIKSGWDEFDVVVATPDMMKDVGRLGPILGKRGLMPNPKTQTVTNNLKDAINSLKKGRTEFRANKNGVISFSFGKSSMDNEKIKENYEEFVKEVVKKRPSDLKGAFIDSIYISSTMGPSIKVNFVWR.

It belongs to the universal ribosomal protein uL1 family. As to quaternary structure, part of the 50S ribosomal subunit.

Binds directly to 23S rRNA. The L1 stalk is quite mobile in the ribosome, and is involved in E site tRNA release. Its function is as follows. Protein L1 is also a translational repressor protein, it controls the translation of the L11 operon by binding to its mRNA. This chain is Large ribosomal subunit protein uL1, found in Borreliella burgdorferi (strain ATCC 35210 / DSM 4680 / CIP 102532 / B31) (Borrelia burgdorferi).